A 507-amino-acid chain; its full sequence is Hexokinase-5 (507 aa).

The chain crosses the membrane as a helical span at residues 4-24 (AAAVGTAVVVAAAVGVAVVLA). The region spanning 44-498 (RKVAAVIEDV…SGIGAALLAA (455 aa)) is the Hexokinase domain. The hexokinase small subdomain stretch occupies residues 99-237 (TGNEQGLFYA…GLDMKIAALV (139 aa)). The ADP site is built by G113, T114, and N115. T203, K204, N238, and D239 together coordinate D-glucose. Residues 238-487 (NDTVGTLAGG…SSVVTKLAND (250 aa)) form a hexokinase large subdomain region. Residue T262 coordinates ADP. 3 residues coordinate D-glucose: N265, E293, and E324. G452 serves as a coordination point for ADP.

This sequence belongs to the hexokinase family. Expressed in roots, leaves, flowers, immature seeds, endosperm and seed coat.

Its subcellular location is the plastid. The protein localises to the chloroplast outer membrane. It catalyses the reaction a D-hexose + ATP = a D-hexose 6-phosphate + ADP + H(+). It carries out the reaction D-fructose + ATP = D-fructose 6-phosphate + ADP + H(+). The enzyme catalyses D-glucose + ATP = D-glucose 6-phosphate + ADP + H(+). Its pathway is carbohydrate metabolism; hexose metabolism. It functions in the pathway carbohydrate degradation; glycolysis; D-glyceraldehyde 3-phosphate and glycerone phosphate from D-glucose: step 1/4. Functionally, fructose and glucose phosphorylating enzyme. Functions as a glucose sensor for plant growth and photosynthesis. Is essential for pollen development, germination, and tube growth. Its activity is necessary for the starch utilization pathway during pollen germination and tube growth, as well as for starch biosynthesis during pollen maturation. This Oryza sativa subsp. japonica (Rice) protein is Hexokinase-5 (HXK5).